The chain runs to 303 residues: Cyclin-dependent kinase 4 (303 aa).

The residue at position 2 (Ala-2) is an N-acetylalanine. Residues 6–295 (YEPVAEIGVG…AFRALQHSYL (290 aa)) enclose the Protein kinase domain. ATP is bound by residues 12–20 (IGVGAYGTV) and Lys-35. Positions 50–56 (PVSTVRE) are required for binding D-type cyclins. Asp-140 acts as the Proton acceptor in catalysis. Thr-172 carries the phosphothreonine; by CAK modification. Ser-300 is modified (phosphoserine).

It belongs to the protein kinase superfamily. CMGC Ser/Thr protein kinase family. CDC2/CDKX subfamily. In terms of assembly, component of the D-CDK4 complex, composed of CDK4 and some D-type G1 cyclin (CCND1, CCND2 or CCND3). Interacts directly in the complex with CCND1, CCND2 or CCND3. Interacts with SEI1 and ZNF655. Forms a ternary complex, cyclin D-CDK4-CDKN1B, involved in modulating CDK4 enzymatic activity. Interacts directly with CDKN1B (phosphorylated on 'Tyr-88' and 'Tyr-89'); the interaction allows assembly of the cyclin D-CDK4 complex, Thr-172 phosphorylation, nuclear translocation and enhances the cyclin D-CDK4 complex activity. CDK4 activity is either inhibited or enhanced depending on stoichiometry of complex. The non-tyrosine-phosphorylated form of CDKN1B prevents T-loop phosphorylation of CDK4 producing inactive CDK4. Interacts (unphosphorylated form) with CDK2. Also forms ternary complexes with CDKN1A or CDKN2A. Interacts directly with CDKN1A (via its N-terminal); the interaction promotes the assembly of the cyclin D-CDK4 complex, its nuclear translocation and promotes the cyclin D-dependent enzyme activity of CDK4. Interacts with CCND1; the interaction is prevented with the binding of CCND1 to INSM1 during cell cycle progression. Probably forms a complex composed of chaperones HSP90 and HSP70, co-chaperones CDC37, PPP5C, TSC1 and client protein TSC2, CDK4, AKT, RAF1 and NR3C1; this complex does not contain co-chaperones STIP1/HOP and PTGES3/p23. Interacts with CEBPA (when phosphorylated). Interacts with FNIP1 and FNIP2. As to expression, expressed in fetal and adult lung. Also expressed in brain, heart, liver, skeletal muscle and testes.

It is found in the cytoplasm. Its subcellular location is the nucleus. It localises to the nucleus membrane. It catalyses the reaction L-seryl-[protein] + ATP = O-phospho-L-seryl-[protein] + ADP + H(+). The enzyme catalyses L-threonyl-[protein] + ATP = O-phospho-L-threonyl-[protein] + ADP + H(+). Both phosphorylation at Thr-172 and binding of a D-type cyclin are necessary for enzymatic activity. Full activation of the cyclin-D-CDK4 complex appears to require other factors such as recruitment of the substrate via a substrate recruitment motif, and/or formation of the CDKN1B ternary complex. Inhibited by INK4 family members. In resting cells, the non-tyrosine-phosphorylated form of CDKN1B prevents phosphorylation at Thr-172 and inactivation, while, in proliferating cells, tyrosine phosphorylation of CDKN1B allows phosphorylation of Thr-172 of CDK4 and subsequent activation. Functionally, ser/Thr-kinase component of cyclin D-CDK4 (DC) complexes that phosphorylate and inhibit members of the retinoblastoma (RB) protein family including RB1 and regulate the cell-cycle during G(1)/S transition. Phosphorylation of RB1 allows dissociation of the transcription factor E2F from the RB/E2F complexes and the subsequent transcription of E2F target genes which are responsible for the progression through the G(1) phase. Hypophosphorylates RB1 in early G(1) phase. Cyclin D-CDK4 complexes are major integrators of various mitogenenic and antimitogenic signals. Also phosphorylates SMAD3 in a cell-cycle-dependent manner and represses its transcriptional activity. Component of the ternary complex, cyclin D/CDK4/CDKN1B, required for nuclear translocation and activity of the cyclin D-CDK4 complex. The polypeptide is Cyclin-dependent kinase 4 (Cdk4) (Rattus norvegicus (Rat)).